A 203-amino-acid chain; its full sequence is Recombination protein RecR (203 aa).

The C4-type zinc finger occupies Cys58 to Cys73. The Toprim domain occupies Ser81 to Pro177.

This sequence belongs to the RecR family.

May play a role in DNA repair. It seems to be involved in an RecBC-independent recombinational process of DNA repair. It may act with RecF and RecO. The chain is Recombination protein RecR from Orientia tsutsugamushi (strain Ikeda) (Rickettsia tsutsugamushi).